A 276-amino-acid polypeptide reads, in one-letter code: Phosphonoacetaldehyde hydrolase (276 aa).

The active-site Nucleophile is the D19. Mg(2+) is bound by residues D19 and A21. Residue K60 is the Schiff-base intermediate with substrate of the active site. D193 contributes to the Mg(2+) binding site.

Belongs to the HAD-like hydrolase superfamily. PhnX family. In terms of assembly, homodimer. Mg(2+) serves as cofactor.

It carries out the reaction phosphonoacetaldehyde + H2O = acetaldehyde + phosphate + H(+). Its function is as follows. Involved in phosphonate degradation. This Bordetella bronchiseptica (strain ATCC BAA-588 / NCTC 13252 / RB50) (Alcaligenes bronchisepticus) protein is Phosphonoacetaldehyde hydrolase.